The chain runs to 195 residues: Interferon tau (195 aa).

Residues 1–23 (MAFVLSLLMALVLASYSPGGSLG) form the signal peptide. 2 cysteine pairs are disulfide-bonded: C24-C122 and C52-C162.

Belongs to the alpha/beta interferon family. IFN-alphaII subfamily. Constitutively and exclusively expressed in the mononuclear cells of the extraembryonic trophectoderm.

Its subcellular location is the secreted. Paracrine hormone primarily responsible for maternal recognition of pregnancy. Interacts with endometrial receptors, probably type I interferon receptors, and blocks estrogen receptor expression, preventing the estrogen-induced increase in oxytocin receptor expression in the endometrium. This results in the suppression of the pulsatile endometrial release of the luteolytic hormone prostaglandin F2-alpha, hindering the regression of the corpus luteum (luteolysis) and therefore a return to ovarian cyclicity. This, and a possible direct effect of IFN-tau on prostaglandin synthesis, leads in turn to continued ovarian progesterone secretion, which stimulates the secretion by the endometrium of the nutrients required for the growth of the conceptus. In summary, displays particularly high antiviral and antiproliferative potency concurrently with particular weak cytotoxicity, high antiluteolytic activity and immunomodulatory properties. In contrast with other IFNs, IFN-tau is not virally inducible. The chain is Interferon tau (IFNT) from Cervus elaphus (Red deer).